Consider the following 254-residue polypeptide: Thiamine thiazole synthase (254 aa).

Residues Ser36, 55-56, Gly63, Val127, and 154-156 contribute to the NAD(+) site; these read EK and HVD. Residues Asp156 and His171 each coordinate Fe cation. Position 219 (Met219) interacts with NAD(+). Arg229 contributes to the glycine binding site.

The protein belongs to the THI4 family. Homooctamer; tetramer of dimers. It depends on Fe(2+) as a cofactor.

It carries out the reaction hydrogen sulfide + glycine + NAD(+) = ADP-5-ethyl-4-methylthiazole-2-carboxylate + nicotinamide + 3 H2O + H(+). It participates in cofactor biosynthesis; thiamine diphosphate biosynthesis. In terms of biological role, involved in the biosynthesis of the thiazole moiety of thiamine. Catalyzes the conversion of NAD and glycine to adenosine diphosphate 5-(2-hydroxyethyl)-4-methylthiazole-2-carboxylate (ADT), an adenylated thiazole intermediate, using free sulfide as a source of sulfur. This Methanoculleus marisnigri (strain ATCC 35101 / DSM 1498 / JR1) protein is Thiamine thiazole synthase.